The primary structure comprises 212 residues: MTDTEKSFKVVLLGEGCVGKTSIVFRYIDNIFNDKHLMTQHAGFFQKHINIGGKRICLTIWDTAGQERFHALGPIYYRGSQGALVVYDITDNDSFIKAKNWIKELKTMLGNDISLCIIGNKCDLEKTRVIPLADAEAYAKSVGAIHYSTSAKLNKGIEELFLDLTRRMILNSSGVVIHSNTNTTGQTTNRSERIPIVPDSDSGNKQPGCCSN.

GTP-binding positions include 14–21 (GEGCVGKT), 62–66 (DTAGQ), and 120–123 (NKCD). The segment at 181-212 (TNTTGQTTNRSERIPIVPDSDSGNKQPGCCSN) is disordered. Positions 201–212 (DSGNKQPGCCSN) are enriched in polar residues. Residues cysteine 209 and cysteine 210 are each lipidated (S-geranylgeranyl cysteine).

Belongs to the small GTPase superfamily. Rab family. As to quaternary structure, interacts with LIM domain proteins limF and ChLim.

The protein localises to the cell membrane. Involved in the regulation of phagocytosis. The polypeptide is Ras-related protein Rab-21 (rab21) (Dictyostelium discoideum (Social amoeba)).